Consider the following 1236-residue polypeptide: DNA-directed RNA polymerase subunit beta (1236 aa).

A disordered region spans residues 1193–1212 (PDVLDDDSYDQNNDEDIDEI). The segment covering 1194–1212 (DVLDDDSYDQNNDEDIDEI) has biased composition (acidic residues).

Belongs to the RNA polymerase beta chain family. The RNAP catalytic core consists of 2 alpha, 1 beta, 1 beta' and 1 omega subunit. When a sigma factor is associated with the core the holoenzyme is formed, which can initiate transcription.

The enzyme catalyses RNA(n) + a ribonucleoside 5'-triphosphate = RNA(n+1) + diphosphate. Its function is as follows. DNA-dependent RNA polymerase catalyzes the transcription of DNA into RNA using the four ribonucleoside triphosphates as substrates. This Clostridium beijerinckii (strain ATCC 51743 / NCIMB 8052) (Clostridium acetobutylicum) protein is DNA-directed RNA polymerase subunit beta.